The sequence spans 148 residues: 3-dehydroquinate dehydratase (148 aa).

Residue Tyr-24 is the Proton acceptor of the active site. Substrate is bound by residues Asn-75, His-81, and Asp-88. His-101 (proton donor) is an active-site residue. Residues 102 to 103 and Arg-112 contribute to the substrate site; that span reads LS.

This sequence belongs to the type-II 3-dehydroquinase family. Homododecamer.

The enzyme catalyses 3-dehydroquinate = 3-dehydroshikimate + H2O. It functions in the pathway metabolic intermediate biosynthesis; chorismate biosynthesis; chorismate from D-erythrose 4-phosphate and phosphoenolpyruvate: step 3/7. Its function is as follows. Catalyzes a trans-dehydration via an enolate intermediate. In Rhizobium meliloti (strain 1021) (Ensifer meliloti), this protein is 3-dehydroquinate dehydratase.